A 260-amino-acid chain; its full sequence is MPNLLEKTRKITSILQRSVDSLETELPYNTMASRLADIIDCNACIINGGGTLLGYAMKYKTNTDRVEEFFEAKQFPDTYVKAASRVYDTEANLSVENELTIFPVESKDTYPGGLTTIAPIYGGGMRLGSLIIWRNDDEFSDDDLILVEISSTVVGIQLLNLQTENLEDTIRKQTAVNMAINTLSYSEMKAVAAILGELDGNEGRLTASVIADRIGITRSVIVNALRKLESAGIIESRSLGMKGTYLKVINEGIFAKLKEF.

Positions 1 to 159 (MPNLLEKTRK…SSTVVGIQLL (159 aa)) are GAF domain. The segment at residues 207 to 226 (ASVIADRIGITRSVIVNALR) is a DNA-binding region (H-T-H motif).

The protein belongs to the CodY family.

Its subcellular location is the cytoplasm. DNA-binding global transcriptional regulator which is involved in the adaptive response to starvation and acts by directly or indirectly controlling the expression of numerous genes in response to nutrient availability. During rapid exponential growth, CodY is highly active and represses genes whose products allow adaptation to nutrient depletion. The sequence is that of Global transcriptional regulator CodY from Streptococcus pyogenes serotype M4 (strain MGAS10750).